The sequence spans 250 residues: 3-deoxy-manno-octulosonate cytidylyltransferase (250 aa).

Belongs to the KdsB family.

The protein localises to the cytoplasm. The catalysed reaction is 3-deoxy-alpha-D-manno-oct-2-ulosonate + CTP = CMP-3-deoxy-beta-D-manno-octulosonate + diphosphate. It functions in the pathway nucleotide-sugar biosynthesis; CMP-3-deoxy-D-manno-octulosonate biosynthesis; CMP-3-deoxy-D-manno-octulosonate from 3-deoxy-D-manno-octulosonate and CTP: step 1/1. The protein operates within bacterial outer membrane biogenesis; lipopolysaccharide biosynthesis. In terms of biological role, activates KDO (a required 8-carbon sugar) for incorporation into bacterial lipopolysaccharide in Gram-negative bacteria. This chain is 3-deoxy-manno-octulosonate cytidylyltransferase, found in Rhodopirellula baltica (strain DSM 10527 / NCIMB 13988 / SH1).